The primary structure comprises 183 residues: Triggering receptor expressed on myeloid cells 3 (183 aa).

An N-terminal signal peptide occupies residues 1–19 (MSPLLLWLGLMLCVSGLQA). The Extracellular segment spans residues 20–138 (GDEEEHKCFL…AWCQGKPVMV (119 aa)). An Ig-like V-type domain is found at 30–128 (EGENLTLTCP…VIILRQRIRL (99 aa)). Asn-33 is a glycosylation site (N-linked (GlcNAc...) asparagine). The cysteines at positions 38 and 110 are disulfide-linked. The helical transmembrane segment at 139–159 (IVLTCGFILNKGLVFSVLFVF) threads the bilayer. At 160-183 (LCKAGPKVLQPSKTSKVQGVSEKQ) the chain is on the cytoplasmic side.

As to quaternary structure, interacts with TYROBP/DAP12. As to expression, expressed in macrophages and in T-cells.

The protein resides in the cell membrane. Forms a receptor signaling complex with TYROBP/DAP12 which mediates activation of macrophages as part of the innate immune response. The polypeptide is Triggering receptor expressed on myeloid cells 3 (Mus musculus (Mouse)).